A 363-amino-acid chain; its full sequence is Pyruvate dehydrogenase E1 component subunit beta-1, mitochondrial (363 aa).

A mitochondrion-targeting transit peptide spans 1 to 29; that stretch reads MLGILRQRAIDGASTLRRTRFALVSARSY. Glu92 provides a ligand contact to thiamine diphosphate. The K(+) site is built by Ile145, Ala193, Ile194, and Asp196. Glycyl lysine isopeptide (Lys-Gly) (interchain with G-Cter in ubiquitin) cross-links involve residues Lys247 and Lys254.

As to quaternary structure, tetramer of 2 alpha and 2 beta subunits. The cofactor is thiamine diphosphate. As to expression, expressed in roots, immature rosettes, and mature rosettes.

Its subcellular location is the mitochondrion matrix. The enzyme catalyses N(6)-[(R)-lipoyl]-L-lysyl-[protein] + pyruvate + H(+) = N(6)-[(R)-S(8)-acetyldihydrolipoyl]-L-lysyl-[protein] + CO2. Functionally, the pyruvate dehydrogenase complex catalyzes the overall conversion of pyruvate to acetyl-CoA and CO(2). It contains multiple copies of three enzymatic components: pyruvate dehydrogenase (E1), dihydrolipoamide acetyltransferase (E2) and lipoamide dehydrogenase (E3). In Arabidopsis thaliana (Mouse-ear cress), this protein is Pyruvate dehydrogenase E1 component subunit beta-1, mitochondrial (PDH2).